Here is a 148-residue protein sequence, read N- to C-terminus: WAP four-disulfide core domain protein 12 (148 aa).

An N-terminal signal peptide occupies residues 1–23; the sequence is MRSYSFWFLTAFLVFATLALGEA. Residues 27–74 enclose the WAP domain; the sequence is GKEKWGNCPAEKGSCIKSGPSQCHADNDCPGDKKCCFLSCSFKCVSPD. Disulfide bonds link C34–C62, C41–C66, C49–C61, and C55–C70. The interval 74 to 148 is disordered; that stretch reads DRIRKEGGNE…QEASPQKEWS (75 aa).

It is found in the secreted. Functionally, antibacterial protein. Putative acid-stable proteinase inhibitor. The protein is WAP four-disulfide core domain protein 12 (WFDC12) of Lemur catta (Ring-tailed lemur).